A 264-amino-acid chain; its full sequence is Undecaprenyl-diphosphatase (264 aa).

6 consecutive transmembrane segments (helical) span residues 41-61 (NLAF…VILW), 82-102 (YVIN…FFKD), 106-126 (AIFG…AALL), 140-160 (ISMK…LPGL), 213-233 (IPAL…CLAC), and 244-264 (KLIY…ITQL).

This sequence belongs to the UppP family.

The protein resides in the cell inner membrane. The enzyme catalyses di-trans,octa-cis-undecaprenyl diphosphate + H2O = di-trans,octa-cis-undecaprenyl phosphate + phosphate + H(+). Its function is as follows. Catalyzes the dephosphorylation of undecaprenyl diphosphate (UPP). Confers resistance to bacitracin. This is Undecaprenyl-diphosphatase from Bacteroides thetaiotaomicron (strain ATCC 29148 / DSM 2079 / JCM 5827 / CCUG 10774 / NCTC 10582 / VPI-5482 / E50).